The chain runs to 223 residues: Deoxyribose-phosphate aldolase (223 aa).

Aspartate 91 serves as the catalytic Proton donor/acceptor. Lysine 154 serves as the catalytic Schiff-base intermediate with acetaldehyde. Residue lysine 183 is the Proton donor/acceptor of the active site.

It belongs to the DeoC/FbaB aldolase family. DeoC type 1 subfamily.

Its subcellular location is the cytoplasm. The enzyme catalyses 2-deoxy-D-ribose 5-phosphate = D-glyceraldehyde 3-phosphate + acetaldehyde. Its pathway is carbohydrate degradation; 2-deoxy-D-ribose 1-phosphate degradation; D-glyceraldehyde 3-phosphate and acetaldehyde from 2-deoxy-alpha-D-ribose 1-phosphate: step 2/2. Catalyzes a reversible aldol reaction between acetaldehyde and D-glyceraldehyde 3-phosphate to generate 2-deoxy-D-ribose 5-phosphate. This chain is Deoxyribose-phosphate aldolase, found in Geobacillus kaustophilus (strain HTA426).